A 407-amino-acid chain; its full sequence is S-adenosylmethionine synthase (407 aa).

H19 provides a ligand contact to ATP. Position 21 (D21) interacts with Mg(2+). E47 serves as a coordination point for K(+). L-methionine is bound by residues E60 and Q103. The tract at residues 103 to 113 (QSQEIADGVDT) is flexible loop. The disordered stretch occupies residues 108-131 (ADGVDTSQEARGDGHFEEDDRAGA). ATP-binding positions include 178–180 (DGK), D258, 264–265 (RK), A281, and K285. D258 is a binding site for L-methionine. K289 contributes to the L-methionine binding site.

Belongs to the AdoMet synthase family. Homotetramer; dimer of dimers. Mg(2+) serves as cofactor. It depends on K(+) as a cofactor.

It localises to the cytoplasm. The enzyme catalyses L-methionine + ATP + H2O = S-adenosyl-L-methionine + phosphate + diphosphate. It functions in the pathway amino-acid biosynthesis; S-adenosyl-L-methionine biosynthesis; S-adenosyl-L-methionine from L-methionine: step 1/1. In terms of biological role, catalyzes the formation of S-adenosylmethionine (AdoMet) from methionine and ATP. The overall synthetic reaction is composed of two sequential steps, AdoMet formation and the subsequent tripolyphosphate hydrolysis which occurs prior to release of AdoMet from the enzyme. In Corynebacterium efficiens (strain DSM 44549 / YS-314 / AJ 12310 / JCM 11189 / NBRC 100395), this protein is S-adenosylmethionine synthase.